Here is a 122-residue protein sequence, read N- to C-terminus: Large ribosomal subunit protein bL12 (122 aa).

Belongs to the bacterial ribosomal protein bL12 family. Homodimer. Part of the ribosomal stalk of the 50S ribosomal subunit. Forms a multimeric L10(L12)X complex, where L10 forms an elongated spine to which 2 to 4 L12 dimers bind in a sequential fashion. Binds GTP-bound translation factors.

In terms of biological role, forms part of the ribosomal stalk which helps the ribosome interact with GTP-bound translation factors. Is thus essential for accurate translation. The protein is Large ribosomal subunit protein bL12 of Mycoplasma genitalium (strain ATCC 33530 / DSM 19775 / NCTC 10195 / G37) (Mycoplasmoides genitalium).